Consider the following 850-residue polypeptide: Depolymerase, capsule KN4-specific (850 aa).

In the N-terminal section; belongs to the Teseptimavirus fiber family. Homotrimer.

The protein localises to the virion. Its function is as follows. Functions as a receptor binding protein (RBP) and probably mediates the attachment to the host capsular exopolysaccharides. Displays a depolymerase activity that specifically degrades the KN4-type polysaccharides of Klebsiella pneumoniae capsule, which allows the phage to reach the host cell membrane and bind the entry receptor. This chain is Depolymerase, capsule KN4-specific, found in Klebsiella pneumoniae (Bacteriophage KN4-1).